Consider the following 380-residue polypeptide: Actinidain (380 aa).

The N-terminal stretch at 1-24 is a signal peptide; sequence MGLPKSFVSMSLLFFSTLLILSLA. The propeptide at 25 to 126 is activation peptide; it reads FNAKNLTQRT…NQYEPRVGQV (102 aa). 3 disulfides stabilise this stretch: Cys148–Cys191, Cys182–Cys224, and Cys282–Cys332. Cys151 is an active-site residue. Position 151 (Cys151) interacts with E64. Catalysis depends on residues His288 and Asn308.

This sequence belongs to the peptidase C1 family. Fruit.

It carries out the reaction Specificity close to that of papain.. With respect to regulation, repressed by the active-site-directed cysteine protease inhibitor E64 (L-trans-epoxysuccinyl-leucylamide-(4-guanido)-butane) produced by Aspergillus japonicus. Its function is as follows. Cysteine protease responsible for the cleavage of kiwellin into kissper and KiTH. The sequence is that of Actinidain from Actinidia chinensis var. chinensis (Chinese soft-hair kiwi).